The following is a 154-amino-acid chain: Transcriptional repressor NrdR (154 aa).

A zinc finger spans residues 3–34 (CPFCTHPDTRVADSRLMEERNAVRRRRHCPNC). The ATP-cone domain occupies 49–139 (PAVIGPDKKR…LHKRFDNPAD (91 aa)).

It belongs to the NrdR family. Requires Zn(2+) as cofactor.

In terms of biological role, negatively regulates transcription of bacterial ribonucleotide reductase nrd genes and operons by binding to NrdR-boxes. The sequence is that of Transcriptional repressor NrdR from Neisseria meningitidis serogroup A / serotype 4A (strain DSM 15465 / Z2491).